We begin with the raw amino-acid sequence, 251 residues long: uncharacterized protein (251 aa).

This is an uncharacterized protein from Acanthamoeba polyphaga mimivirus (APMV).